The following is a 785-amino-acid chain: MNKKILDVLEYDKIKQSIRQFIATENGTKELRELVPSSDETEVRNALKQTLDAVNIYRLKNGIPVPRLEDVTEALQRLKIDAALNGQELAQIGRILRATRTVINFFDDLENEEIEIIALDQVIEQLVTIPEVEERLSNSIEGNGHLLNSASSELRRIRASITRIESDVRSRMEKFTRGNNVKYLSEPIVTIRNERYVIPARVEYRSKFGGVVHDQSSSGQTLYVEPESVVDLNNELRQNQVAEVHEEQRILQELSALVAPYTDTLKDNSRILGHLDLLNAKAQYAHQLKATEPQISASNEINLREARHPLIDQKKVVSNDIRLGGEYETLVITGPNTGGKTITLKTVGLLQLMAQSGMFIPANENSTVRIFEEIFADIGDEQSIEQNLSTFSSHMDNTIRILGNLNERSLALFDELGAGTDPKEGAALAIAILDKVRSTGAVSMTTTHYPELKTYGYERMGTINASMEFDVDTLQPTYKLLLGIPGQSNAFEISKRLGLDSDIISQARGLVDQDSQDLNNMIKDLTTRQKRAQKINQQAVELLKQAEEYHQTLVKGVDSLNSQRSNLIESAKEDANRIVNDSQAEADRIIKRLRKLEHSTGSFKENDLIDAKSKINALHQDTNLKRNKVLRRAKEAQKFHENDEVVVLTYGQRGELLRQVDKKHWEVQMGIMKMKVAVDELEKVKPDKTVKRRVHNSVQRTASAGVKTTLDLRGKRYEEALTETDRYIDAALLAGYDEVTIVHGKGTGALRSGITKYLKNNRRIKAFEYAPANAGGNGATIVHFK.

Position 334–341 (334–341 (GPNTGGKT)) interacts with ATP. Residues 710–785 (LDLRGKRYEE…GNGATIVHFK (76 aa)) form the Smr domain.

The protein belongs to the DNA mismatch repair MutS family. MutS2 subfamily. Homodimer. Binds to stalled ribosomes, contacting rRNA.

Endonuclease that is involved in the suppression of homologous recombination and thus may have a key role in the control of bacterial genetic diversity. Its function is as follows. Acts as a ribosome collision sensor, splitting the ribosome into its 2 subunits. Detects stalled/collided 70S ribosomes which it binds and splits by an ATP-hydrolysis driven conformational change. Acts upstream of the ribosome quality control system (RQC), a ribosome-associated complex that mediates the extraction of incompletely synthesized nascent chains from stalled ribosomes and their subsequent degradation. Probably generates substrates for RQC. This chain is Endonuclease MutS2, found in Pediococcus pentosaceus (strain ATCC 25745 / CCUG 21536 / LMG 10740 / 183-1w).